We begin with the raw amino-acid sequence, 414 residues long: Gamma-glutamyl phosphate reductase (414 aa).

This sequence belongs to the gamma-glutamyl phosphate reductase family.

It is found in the cytoplasm. It catalyses the reaction L-glutamate 5-semialdehyde + phosphate + NADP(+) = L-glutamyl 5-phosphate + NADPH + H(+). The protein operates within amino-acid biosynthesis; L-proline biosynthesis; L-glutamate 5-semialdehyde from L-glutamate: step 2/2. Functionally, catalyzes the NADPH-dependent reduction of L-glutamate 5-phosphate into L-glutamate 5-semialdehyde and phosphate. The product spontaneously undergoes cyclization to form 1-pyrroline-5-carboxylate. The sequence is that of Gamma-glutamyl phosphate reductase from Geobacillus thermodenitrificans (strain NG80-2).